Reading from the N-terminus, the 827-residue chain is Multiphosphoryl transfer protein (827 aa).

The PTS EIIA type-2 domain occupies 2 to 142; that stretch reads IPLTSELVAI…AVIVARLTGA (141 aa). His62 acts as the Tele-phosphohistidine intermediate; for EIIA activity in catalysis. Position 62 is a phosphohistidine; by HPr (His62). One can recognise an HPr domain in the interval 157 to 245; it reads AQGIDVVVTG…AFEAGLEDEE (89 aa). Catalysis depends on His171, which acts as the Pros-phosphohistidine intermediate; for HPr activity. At His171 the chain carries Phosphohistidine; by EI. Positions 270-827 are PTS EI; that stretch reads EGRTLVGISS…TTAAEVRGLK (558 aa). Catalysis depends on His457, which acts as the Tele-phosphohistidine intermediate; for PTS EI activity. A Phosphohistidine; by autocatalysis modification is found at His457. The phosphoenolpyruvate site is built by Arg564 and Arg600. Residues Glu693 and Asp717 each contribute to the Mg(2+) site. Phosphoenolpyruvate contacts are provided by residues 716–717 and Arg727; that span reads ND. Catalysis depends on Cys764, which acts as the Proton donor.

Belongs to the PEP-utilizing enzyme family. Mg(2+) is required as a cofactor.

The protein localises to the cytoplasm. It catalyses the reaction L-histidyl-[protein] + phosphoenolpyruvate = N(pros)-phospho-L-histidyl-[protein] + pyruvate. In terms of biological role, the phosphoenolpyruvate-dependent sugar phosphotransferase system (sugar PTS), a major carbohydrate active transport system, catalyzes the phosphorylation of incoming sugar substrates concomitantly with their translocation across the cell membrane. The enzyme II FruAB PTS system is involved in fructose transport. The sequence is that of Multiphosphoryl transfer protein from Rhodobacter capsulatus (Rhodopseudomonas capsulata).